The primary structure comprises 389 residues: D-alanyl-D-alanine carboxypeptidase DacF (389 aa).

An N-terminal signal peptide occupies residues 1–23 (MKRLLSTLLIGIMLLTFAPSAFA). Ser64 serves as the catalytic Acyl-ester intermediate. The active-site Proton acceptor is Lys67. Ser124 is a catalytic residue. Lys230 contributes to the substrate binding site.

Belongs to the peptidase S11 family.

It localises to the secreted. The catalysed reaction is Preferential cleavage: (Ac)2-L-Lys-D-Ala-|-D-Ala. Also transpeptidation of peptidyl-alanyl moieties that are N-acyl substituents of D-alanine.. Its pathway is cell wall biogenesis; peptidoglycan biosynthesis. Its function is as follows. Removes C-terminal D-alanyl residues from sugar-peptide cell wall precursors. The protein is D-alanyl-D-alanine carboxypeptidase DacF (dacF) of Bacillus subtilis (strain 168).